The primary structure comprises 148 residues: MTIQLHNTTRRALPEAKLKKAVRLVLSEEGGKAVSIDAIYCGGRMMRRINREFLGHDYDTDTVTFPYSEGLVVEGEFYVSLDEVGRNAVRFKSGFEQELLRVTIHSVLHLLGYDDASPEERGRMRQKEDRYLRILGAGVSSTEERSQV.

Positions 105, 109, and 115 each coordinate Zn(2+).

It belongs to the endoribonuclease YbeY family. Zn(2+) serves as cofactor.

It is found in the cytoplasm. In terms of biological role, single strand-specific metallo-endoribonuclease involved in late-stage 70S ribosome quality control and in maturation of the 3' terminus of the 16S rRNA. The chain is Endoribonuclease YbeY from Chlorobium phaeovibrioides (strain DSM 265 / 1930) (Prosthecochloris vibrioformis (strain DSM 265)).